We begin with the raw amino-acid sequence, 593 residues long: Vicilin Jug r 2.0101 (593 aa).

2 stretches are compositionally biased toward basic and acidic residues: residues 46–76 (LEED…EQRY) and 97–118 (RRCE…DRQD). Positions 46–123 (LEEDQRSQEE…RDRQDPQQQY (78 aa)) are disordered. IgE-binding stretches follow at residues 49 to 58 (DQRSQEERER), 76 to 85 (YEQCQQQCER), and 101 to 110 (QRRQQEERER). The tract at residues 140-149 (QRQCQQRCER) is igE-binding. Involved in cross-reactivity with peanut allergen Ara h 2; able to inhibit binding of IgE from a peanut-allergic patient to Ara h 2. The segment covering 150–178 (QYKEQQGRERGPEASPRRESRGREEEQQR) has biased composition (basic and acidic residues). Positions 150–184 (QYKEQQGRERGPEASPRRESRGREEEQQRHNPYYF) are disordered. 2 T-cell epitope; recognized by the HLA-DRB1-restricted CD4(+) T-cells regions span residues 175-193 (EQQR…RSRH) and 206-225 (FTER…VILD). Cu cation is bound at residue tyrosine 182. Cupin type-1 domains are found at residues 187–341 (QSIR…DRLE) and 386–556 (ISLK…EEIE). Residue asparagine 229 is glycosylated (N-linked (GlcNAc...) asparagine). T-cell epitope; recognized by the HLA-DRB1-restricted CD4(+) T-cells regions lie at residues 246–265 (TRGR…SFNL), 302–321 (PGQF…QSYL), 318–337 (QSYL…NTPR), 382–401 (SGGP…QFGQ), 414–433 (QEMD…MMVP), and 438–457 (KATV…MACP). Positions 456 and 458 each coordinate Cu cation. Residues 463-470 (SYEGQGRR) form an igE-binding region. Residues 478–497 (TGRFQKVTARLARGDIFVIP) form a T-cell epitope; recognized by the HLA-DRB1-restricted CD4(+) T-cells region. A Cu cation-binding site is contributed by histidine 500. The stretch at 529–556 (LAGQNNIINQLEREAKELSFNMPREEIE) forms a coiled coil. The interval 541 to 555 (REAKELSFNMPREEI) is igE-binding. T-cell epitope; recognized by the HLA-DRB1-restricted CD4(+) T-cells regions lie at residues 542 to 561 (EAKE…IFES) and 558 to 577 (IFES…SRRG).

The protein belongs to the 7S seed storage protein family. Post-translationally, proteolytically cleaved. In terms of tissue distribution, expressed in seed (at protein level).

Functionally, seed storage protein. The sequence is that of Vicilin Jug r 2.0101 from Juglans regia (English walnut).